The following is a 292-amino-acid chain: ATP phosphoribosyltransferase (292 aa).

The protein belongs to the ATP phosphoribosyltransferase family. Long subfamily. Mg(2+) serves as cofactor.

The protein localises to the cytoplasm. The catalysed reaction is 1-(5-phospho-beta-D-ribosyl)-ATP + diphosphate = 5-phospho-alpha-D-ribose 1-diphosphate + ATP. It functions in the pathway amino-acid biosynthesis; L-histidine biosynthesis; L-histidine from 5-phospho-alpha-D-ribose 1-diphosphate: step 1/9. With respect to regulation, feedback inhibited by histidine. Catalyzes the condensation of ATP and 5-phosphoribose 1-diphosphate to form N'-(5'-phosphoribosyl)-ATP (PR-ATP). Has a crucial role in the pathway because the rate of histidine biosynthesis seems to be controlled primarily by regulation of HisG enzymatic activity. This is ATP phosphoribosyltransferase from Thermodesulfovibrio yellowstonii (strain ATCC 51303 / DSM 11347 / YP87).